A 225-amino-acid polypeptide reads, in one-letter code: Membrin-11 (225 aa).

Residue Ala2 is modified to N-acetylalanine. Topologically, residues 2–200 are cytoplasmic; the sequence is ASGIVEGGGS…VLRLIERRNR (199 aa). Residues 201–221 form a helical; Anchor for type IV membrane protein membrane-spanning segment; sequence VDTWIKYAGMIATLVILYLFI. Residues 222 to 225 are Vesicular-facing; that stretch reads RWTR.

The protein belongs to the GOSR2 family.

The protein resides in the golgi apparatus membrane. Its function is as follows. Involved in transport of proteins from the cis/medial-Golgi to the trans-Golgi network. This Arabidopsis thaliana (Mouse-ear cress) protein is Membrin-11 (MEMB11).